A 122-amino-acid polypeptide reads, in one-letter code: HetP-like commitment protein Alr3234 (122 aa).

Belongs to the HetP family. In bacterial two-hybrid assays interacts robustly with itself, Asl1930, Alr2902 and HetR and weakly with HetP.

Delays heterocyst differentiation and commitment when nitrogen is limiting. Interplay between the 4 HetP paralogs controls the timing of commitment to heterocyst formation and its duration. Epistatic analysis show that the 3 paralogs act upstream of hetP to delay commitment (asl1930, alr3234) or inhibit development (alr2902). Asl1930 and Alr3234 must also attenuate the activity of Alr2902. Ectopic expression does not complement a hetP deletion. The sequence is that of HetP-like commitment protein Alr3234 from Nostoc sp. (strain PCC 7120 / SAG 25.82 / UTEX 2576).